Here is a 313-residue protein sequence, read N- to C-terminus: 2,3-dihydroxyphenylpropionate/2,3-dihydroxicinnamic acid 1,2-dioxygenase (313 aa).

Residue histidine 116 is the Proton donor of the active site. The Proton acceptor role is filled by histidine 180.

It belongs to the LigB/MhpB extradiol dioxygenase family. As to quaternary structure, homotetramer. Fe(2+) is required as a cofactor.

The catalysed reaction is 3-(2,3-dihydroxyphenyl)propanoate + O2 = (2Z,4E)-2-hydroxy-6-oxonona-2,4-dienedioate + H(+). The enzyme catalyses (2E)-3-(2,3-dihydroxyphenyl)prop-2-enoate + O2 = (2Z,4E,7E)-2-hydroxy-6-oxonona-2,4,7-trienedioate + H(+). It participates in aromatic compound metabolism; 3-phenylpropanoate degradation. In terms of biological role, catalyzes the non-heme iron(II)-dependent oxidative cleavage of 2,3-dihydroxyphenylpropionic acid and 2,3-dihydroxicinnamic acid into 2-hydroxy-6-ketononadienedioate and 2-hydroxy-6-ketononatrienedioate, respectively. In Mycobacterium sp. (strain MCS), this protein is 2,3-dihydroxyphenylpropionate/2,3-dihydroxicinnamic acid 1,2-dioxygenase.